A 491-amino-acid chain; its full sequence is Aspartyl/glutamyl-tRNA(Asn/Gln) amidotransferase subunit B (491 aa).

Belongs to the GatB/GatE family. GatB subfamily. Heterotrimer of A, B and C subunits.

The enzyme catalyses L-glutamyl-tRNA(Gln) + L-glutamine + ATP + H2O = L-glutaminyl-tRNA(Gln) + L-glutamate + ADP + phosphate + H(+). The catalysed reaction is L-aspartyl-tRNA(Asn) + L-glutamine + ATP + H2O = L-asparaginyl-tRNA(Asn) + L-glutamate + ADP + phosphate + 2 H(+). Allows the formation of correctly charged Asn-tRNA(Asn) or Gln-tRNA(Gln) through the transamidation of misacylated Asp-tRNA(Asn) or Glu-tRNA(Gln) in organisms which lack either or both of asparaginyl-tRNA or glutaminyl-tRNA synthetases. The reaction takes place in the presence of glutamine and ATP through an activated phospho-Asp-tRNA(Asn) or phospho-Glu-tRNA(Gln). This Paraburkholderia phytofirmans (strain DSM 17436 / LMG 22146 / PsJN) (Burkholderia phytofirmans) protein is Aspartyl/glutamyl-tRNA(Asn/Gln) amidotransferase subunit B.